The following is a 165-amino-acid chain: Phosphopantetheine adenylyltransferase (165 aa).

Substrate is bound at residue Ser-10. ATP is bound by residues 10-11 (SF) and His-18. 3 residues coordinate substrate: Lys-42, Ser-79, and Arg-93. Residues 94–96 (GLR), Glu-104, and 129–135 (VRPITAT) contribute to the ATP site.

It belongs to the bacterial CoaD family. Homohexamer. It depends on Mg(2+) as a cofactor.

The protein resides in the cytoplasm. The catalysed reaction is (R)-4'-phosphopantetheine + ATP + H(+) = 3'-dephospho-CoA + diphosphate. The protein operates within cofactor biosynthesis; coenzyme A biosynthesis; CoA from (R)-pantothenate: step 4/5. Reversibly transfers an adenylyl group from ATP to 4'-phosphopantetheine, yielding dephospho-CoA (dPCoA) and pyrophosphate. The protein is Phosphopantetheine adenylyltransferase of Bradyrhizobium diazoefficiens (strain JCM 10833 / BCRC 13528 / IAM 13628 / NBRC 14792 / USDA 110).